We begin with the raw amino-acid sequence, 424 residues long: L-glutamine:2-deoxy-scyllo-inosose aminotransferase (424 aa).

Lys-202 is modified (N6-(pyridoxal phosphate)lysine).

The protein belongs to the DegT/DnrJ/EryC1 family. L-glutamine:2-deoxy-scyllo-inosose/scyllo-inosose aminotransferase subfamily. Pyridoxal 5'-phosphate is required as a cofactor.

It carries out the reaction 2-deoxy-L-scyllo-inosose + L-glutamine = 2-deoxy-scyllo-inosamine + 2-oxoglutaramate. It catalyses the reaction 3-amino-2,3-dideoxy-scyllo-inosose + L-glutamine = 2-deoxystreptamine + 2-oxoglutaramate. The protein operates within metabolic intermediate biosynthesis; 2-deoxystreptamine biosynthesis; 2-deoxystreptamine from D-glucose 6-phosphate: step 2/4. It functions in the pathway antibiotic biosynthesis; lividomycin biosynthesis. In terms of biological role, catalyzes the PLP-dependent transamination of 2-deoxy-scyllo-inosose (2-DOI) to form 2-deoxy-scyllo-inosamine (2-DOIA) using L-glutamine as the amino donor. Also catalyzes the transamination of 3-amino-2,3-dideoxy-scyllo-inosose (keto-2-DOIA) into 2-deoxystreptamine (2-DOS). The protein is L-glutamine:2-deoxy-scyllo-inosose aminotransferase (livS) of Streptomyces lividus.